A 599-amino-acid chain; its full sequence is Sulfite reductase [NADPH] flavoprotein alpha-component (599 aa).

The Flavodoxin-like domain occupies Ile-64 to Val-202. FMN-binding positions include Ser-70–Ala-75, Ser-117–Gly-120, and Leu-153–Cys-162. Residues Glu-234–Pro-448 enclose the FAD-binding FR-type domain. Residues Thr-322, Ala-356, Arg-386–Ser-389, Thr-404–Gly-406, Tyr-410, and Gly-419–Ser-422 contribute to the FAD site. Residues Ser-519 to Arg-520, Lys-525 to Gln-529, and Asp-561 each bind NADP(+). Residue Tyr-599 participates in FAD binding.

It belongs to the NADPH-dependent sulphite reductase flavoprotein subunit CysJ family. This sequence in the N-terminal section; belongs to the flavodoxin family. The protein in the C-terminal section; belongs to the flavoprotein pyridine nucleotide cytochrome reductase family. In terms of assembly, alpha(8)-beta(8). The alpha component is a flavoprotein, the beta component is a hemoprotein. It depends on FAD as a cofactor. FMN is required as a cofactor.

The enzyme catalyses hydrogen sulfide + 3 NADP(+) + 3 H2O = sulfite + 3 NADPH + 4 H(+). The protein operates within sulfur metabolism; hydrogen sulfide biosynthesis; hydrogen sulfide from sulfite (NADPH route): step 1/1. Functionally, component of the sulfite reductase complex that catalyzes the 6-electron reduction of sulfite to sulfide. This is one of several activities required for the biosynthesis of L-cysteine from sulfate. The flavoprotein component catalyzes the electron flow from NADPH -&gt; FAD -&gt; FMN to the hemoprotein component. The protein is Sulfite reductase [NADPH] flavoprotein alpha-component of Klebsiella pneumoniae subsp. pneumoniae (strain ATCC 700721 / MGH 78578).